The sequence spans 515 residues: 2-isopropylmalate synthase (515 aa).

The Pyruvate carboxyltransferase domain occupies 5–267; sequence VIIFDTTLRD…RTGINHEEIH (263 aa). Asp14, His202, His204, and Asn238 together coordinate Mn(2+). Residues 392–515 form a regulatory domain region; sequence KLNYLSVQSG…EMKQKKIATV (124 aa).

Belongs to the alpha-IPM synthase/homocitrate synthase family. LeuA type 1 subfamily. As to quaternary structure, homodimer. Requires Mn(2+) as cofactor.

It localises to the cytoplasm. The catalysed reaction is 3-methyl-2-oxobutanoate + acetyl-CoA + H2O = (2S)-2-isopropylmalate + CoA + H(+). It functions in the pathway amino-acid biosynthesis; L-leucine biosynthesis; L-leucine from 3-methyl-2-oxobutanoate: step 1/4. Functionally, catalyzes the condensation of the acetyl group of acetyl-CoA with 3-methyl-2-oxobutanoate (2-ketoisovalerate) to form 3-carboxy-3-hydroxy-4-methylpentanoate (2-isopropylmalate). This chain is 2-isopropylmalate synthase, found in Vibrio vulnificus (strain CMCP6).